The chain runs to 77 residues: Liver-expressed antimicrobial peptide 2 (77 aa).

The first 22 residues, 1–22, serve as a signal peptide directing secretion; it reads MWHLKLCAVLMIFLLLLGQTDG. A propeptide spanning residues 23–37 is cleaved from the precursor; it reads SPIPEVSSAKRRPRR. Disulfide bonds link cysteine 54–cysteine 65 and cysteine 60–cysteine 70.

Belongs to the LEAP2 family.

The protein localises to the secreted. Has an antimicrobial activity. The polypeptide is Liver-expressed antimicrobial peptide 2 (LEAP2) (Macaca mulatta (Rhesus macaque)).